The following is a 540-amino-acid chain: MLFCDDSKKYLKEQNINLKNEFDKDDKRVEKFSLKHQNIYFDYSKNLINDYILKSLLESAEKSSLKDKIKQMFNGAKINSTEHRAVLHTALRDLSSTPLIVDGQDIRQEVTKEKQRVKELVEKVVSGRWRGFSGKKITDIVNIGIGGSDLGPKMVVRALQPYHCTDLKVHFVSNVDADSLLQALHVVDPETTLFIIASKSFSTEETLLNSISAREWLLDHYEDEKAVANHFVAISSKLDKVKEFGIDLEHCYKMWDWVGGRYSLWSSIGMSIAFAIGYDNFEKLLAGAYSVDKHFKETEFSKNIPVIMALLASYYSCTYNSQSQALLPYDERLCYFVDYLQQADMESNGKSVNIAGETVNYQTGVVLWGGVGTNGQHAFHQLLHQGNIFIPVDFIAIATSHHNYDNHQQALLANCFAQSQALMFGQSYDMVYNELLKSGLNETQAKELAAHKVIPGNRPSTTILLDELSPYSLGALIALYEHKIFVQGVLWDINSYDQWGVELGKKLGKNILKAMNDDSSDEYQNLDDSTRQLIAKVKNK.

Residue Glu-346 is the Proton donor of the active site. Residues His-377 and Lys-505 contribute to the active site.

It belongs to the GPI family.

It localises to the cytoplasm. It carries out the reaction alpha-D-glucose 6-phosphate = beta-D-fructose 6-phosphate. The protein operates within carbohydrate biosynthesis; gluconeogenesis. It functions in the pathway carbohydrate degradation; glycolysis; D-glyceraldehyde 3-phosphate and glycerone phosphate from D-glucose: step 2/4. Catalyzes the reversible isomerization of glucose-6-phosphate to fructose-6-phosphate. In Francisella tularensis subsp. tularensis (strain SCHU S4 / Schu 4), this protein is Glucose-6-phosphate isomerase.